Here is a 253-residue protein sequence, read N- to C-terminus: Triosephosphate isomerase, cytosolic (253 aa).

2 residues coordinate substrate: Asn10 and Lys12. His96 serves as the catalytic Electrophile. Catalysis depends on Glu166, which acts as the Proton acceptor.

It belongs to the triosephosphate isomerase family. Homodimer.

The protein localises to the cytoplasm. It carries out the reaction D-glyceraldehyde 3-phosphate = dihydroxyacetone phosphate. It functions in the pathway carbohydrate biosynthesis; gluconeogenesis. The protein operates within carbohydrate degradation; glycolysis; D-glyceraldehyde 3-phosphate from glycerone phosphate: step 1/1. The protein is Triosephosphate isomerase, cytosolic of Secale cereale (Rye).